The sequence spans 136 residues: Calmodulin-A (136 aa).

EF-hand domains lie at 1–36, 37–72, 74–109, and 110–136; these read EQIAEFKEAFSLFDKDGDGTITTKELGTVMRSLGQN, PTEAELQDMINEVDADGNGTIDFPEFLTMMARKMKD, DSEEEIREAFRVFDKDGNGYISAAELRHVMTNLGEK, and LTDEEVDEMIREADIDGDGQVNYEEFV. Ca(2+) contacts are provided by Asp-14, Asp-16, Asp-18, Thr-20, Glu-25, Asp-50, Asp-52, Asn-54, Thr-56, Glu-61, Asp-87, Asp-89, Asn-91, Tyr-93, and Glu-98. At Lys-109 the chain carries N6,N6,N6-trimethyllysine. The Ca(2+) site is built by Asp-123, Asp-125, Asp-127, Gln-129, and Glu-134.

Belongs to the calmodulin family.

Functionally, calmodulin acts as part of a calcium signal transduction pathway by mediating the control of a large number of enzymes, ion channels, aquaporins and other proteins through calcium-binding. Calcium-binding is required for the activation of calmodulin. Among the enzymes to be stimulated by the calmodulin-calcium complex are a number of protein kinases, such as myosin light-chain kinases and calmodulin-dependent protein kinase type II (CaMK2), and phosphatases. The sequence is that of Calmodulin-A (calm1) from Oryzias latipes (Japanese rice fish).